The sequence spans 439 residues: Ribosomal protein uS12 methylthiotransferase RimO (439 aa).

Residues 2–114 (SKLYLMSLGC…IDEMILKKTN (113 aa)) form the MTTase N-terminal domain. 6 residues coordinate [4Fe-4S] cluster: Cys11, Cys45, Cys77, Cys146, Cys150, and Cys153. The 232-residue stretch at 132-363 (TGSNSHAFIK…VDEVIEKSFE (232 aa)) folds into the Radical SAM core domain.

It belongs to the methylthiotransferase family. RimO subfamily. The cofactor is [4Fe-4S] cluster.

The protein localises to the cytoplasm. The enzyme catalyses L-aspartate(89)-[ribosomal protein uS12]-hydrogen + (sulfur carrier)-SH + AH2 + 2 S-adenosyl-L-methionine = 3-methylsulfanyl-L-aspartate(89)-[ribosomal protein uS12]-hydrogen + (sulfur carrier)-H + 5'-deoxyadenosine + L-methionine + A + S-adenosyl-L-homocysteine + 2 H(+). Catalyzes the methylthiolation of an aspartic acid residue of ribosomal protein uS12. This is Ribosomal protein uS12 methylthiotransferase RimO from Campylobacter jejuni subsp. jejuni serotype O:2 (strain ATCC 700819 / NCTC 11168).